The sequence spans 133 residues: MAKEFGRPQRVAQEMQKEIAIILQREIKDPRLGMMTTVSGVEMSRDLAYAKVFVTFLNDKDEDAVKAGIKALQEASGFIRSLLGKAMRLRIVPELTFFYDNSLVEGMRMSNLVTNVVKHDEERRVNPDDSKED.

Belongs to the RbfA family. As to quaternary structure, monomer. Binds 30S ribosomal subunits, but not 50S ribosomal subunits or 70S ribosomes.

It localises to the cytoplasm. Its function is as follows. One of several proteins that assist in the late maturation steps of the functional core of the 30S ribosomal subunit. Associates with free 30S ribosomal subunits (but not with 30S subunits that are part of 70S ribosomes or polysomes). Required for efficient processing of 16S rRNA. May interact with the 5'-terminal helix region of 16S rRNA. The chain is Ribosome-binding factor A from Salmonella typhimurium (strain LT2 / SGSC1412 / ATCC 700720).